A 319-amino-acid chain; its full sequence is ATP-dependent 6-phosphofructokinase (319 aa).

Gly11 lines the ATP pocket. 21–25 (RAVVR) contributes to the ADP binding site. ATP-binding positions include 72-73 (RC) and 102-105 (GDGS). Asp103 is a binding site for Mg(2+). 125–127 (TID) contributes to the substrate binding site. Catalysis depends on Asp127, which acts as the Proton acceptor. Arg154 lines the ADP pocket. Residues Arg162 and 169 to 171 (MGR) each bind substrate. Residues 185–187 (GAE), Lys211, and 213–215 (KMH) each bind ADP. Substrate contacts are provided by residues Glu222, Arg243, and 249-252 (HIQR).

It belongs to the phosphofructokinase type A (PFKA) family. ATP-dependent PFK group I subfamily. Prokaryotic clade 'B1' sub-subfamily. As to quaternary structure, homotetramer. The cofactor is Mg(2+).

The protein localises to the cytoplasm. It catalyses the reaction beta-D-fructose 6-phosphate + ATP = beta-D-fructose 1,6-bisphosphate + ADP + H(+). The protein operates within carbohydrate degradation; glycolysis; D-glyceraldehyde 3-phosphate and glycerone phosphate from D-glucose: step 3/4. With respect to regulation, allosterically activated by ADP and other diphosphonucleosides, and allosterically inhibited by phosphoenolpyruvate. Catalyzes the phosphorylation of D-fructose 6-phosphate to fructose 1,6-bisphosphate by ATP, the first committing step of glycolysis. The sequence is that of ATP-dependent 6-phosphofructokinase from Clostridium botulinum (strain ATCC 19397 / Type A).